A 147-amino-acid chain; its full sequence is Ubiquitin-conjugating enzyme E2 D3 (147 aa).

Residues 1–147 (MALKRINKEL…SREWTQKYAM (147 aa)) form the UBC core domain. The cysteines at positions 21 and 107 are disulfide-linked. The Glycyl thioester intermediate role is filled by cysteine 85.

The protein belongs to the ubiquitin-conjugating enzyme family. As to quaternary structure, interacts with SCF (SKP1-CUL1-F-box protein) E3 ubiquitin ligase complex; when Cullin is neddylated, the interaction between the E2 and the SCF complex is strengthened. Interacts with DAPK3. Interacts with BRCA1; the DNA damage checkpoint promotes the association with BRCA1 after ionizing radiation. Interacts non-covalently with ubiquitin. Interacts with E3 ubiquitin-protein ligase CBLC. Interacts with UBTD1. Interacts with RIGI and RNF135; involved in RIGI ubiquitination and activation. Phosphorylated by AURKB.

The protein localises to the cell membrane. The protein resides in the endosome membrane. The catalysed reaction is S-ubiquitinyl-[E1 ubiquitin-activating enzyme]-L-cysteine + [E2 ubiquitin-conjugating enzyme]-L-cysteine = [E1 ubiquitin-activating enzyme]-L-cysteine + S-ubiquitinyl-[E2 ubiquitin-conjugating enzyme]-L-cysteine.. It carries out the reaction S-ubiquitinyl-[E1 ubiquitin-activating enzyme]-L-cysteine + [acceptor protein]-L-lysine = [E1 ubiquitin-activating enzyme]-L-cysteine + N(6)-monoubiquitinyl-[acceptor protein]-L-lysine.. The protein operates within protein modification; protein ubiquitination. In terms of biological role, accepts ubiquitin from the E1 complex and catalyzes its covalent attachment to other proteins. In vitro catalyzes 'Lys-11'-, as well as 'Lys-48'-linked polyubiquitination. Cooperates with the E2 CDC34 and the SCF(FBXW11) E3 ligase complex for the polyubiquitination of NFKBIA leading to its subsequent proteasomal degradation. Acts as an initiator E2, priming the phosphorylated NFKBIA target at positions 'Lys-21' and/or 'Lys-22' with a monoubiquitin. Ubiquitin chain elongation is then performed by CDC34, building ubiquitin chains from the UBE2D3-primed NFKBIA-linked ubiquitin. Also acts as an initiator E2, in conjunction with RNF8, for the priming of PCNA. Monoubiquitination of PCNA, and its subsequent polyubiquitination, are essential events in the operation of the DNA damage tolerance (DDT) pathway that is activated after DNA damage caused by UV or chemical agents during S-phase. Associates with the BRCA1/BARD1 E3 ligase complex to perform ubiquitination at DNA damage sites following ionizing radiation leading to DNA repair. Targets DAPK3 for ubiquitination which influences promyelocytic leukemia protein nuclear body (PML-NB) formation in the nucleus. In conjunction with the MDM2 and TOPORS E3 ligases, functions ubiquitination of p53/TP53. In conjunction with the CBL E3 ligase, targets EGFR for polyubiquitination at the plasma membrane as well as during its internalization and transport on endosomes. In conjunction with the STUB1 E3 quality control E3 ligase, ubiquitinates unfolded proteins to catalyze their immediate destruction. Together with RNF135, catalyzes the viral RNA-dependent 'Lys-63'-linked polyubiquitination of RIGI to activate the downstream signaling pathway that leads to interferon beta production. Together with ZNF598, catalyzes ubiquitination of 40S ribosomal proteins in response to ribosome collisions. In cooperation with the GATOR2 complex, catalyzes 'Lys-6'-linked ubiquitination of NPRL2. This chain is Ubiquitin-conjugating enzyme E2 D3 (UBE2D3), found in Bos taurus (Bovine).